The chain runs to 408 residues: Acetate kinase (408 aa).

Residue Asn-7 participates in Mg(2+) binding. Lys-14 contacts ATP. Arg-91 is a substrate binding site. The Proton donor/acceptor role is filled by Asp-148. Residues 208 to 212 (HLGNG), 283 to 285 (DFR), and 331 to 335 (GIGEN) each bind ATP. Glu-384 provides a ligand contact to Mg(2+).

Belongs to the acetokinase family. As to quaternary structure, homodimer. Mg(2+) is required as a cofactor. Mn(2+) serves as cofactor.

Its subcellular location is the cytoplasm. The enzyme catalyses acetate + ATP = acetyl phosphate + ADP. It participates in metabolic intermediate biosynthesis; acetyl-CoA biosynthesis; acetyl-CoA from acetate: step 1/2. Catalyzes the formation of acetyl phosphate from acetate and ATP. Can also catalyze the reverse reaction. The chain is Acetate kinase from Methanosarcina acetivorans (strain ATCC 35395 / DSM 2834 / JCM 12185 / C2A).